The chain runs to 366 residues: Cobalt-precorrin-5B C(1)-methyltransferase (366 aa).

It belongs to the CbiD family.

The enzyme catalyses Co-precorrin-5B + S-adenosyl-L-methionine = Co-precorrin-6A + S-adenosyl-L-homocysteine. It functions in the pathway cofactor biosynthesis; adenosylcobalamin biosynthesis; cob(II)yrinate a,c-diamide from sirohydrochlorin (anaerobic route): step 6/10. Functionally, catalyzes the methylation of C-1 in cobalt-precorrin-5B to form cobalt-precorrin-6A. This Thermoanaerobacter sp. (strain X514) protein is Cobalt-precorrin-5B C(1)-methyltransferase.